The sequence spans 100 residues: Aspartyl/glutamyl-tRNA(Asn/Gln) amidotransferase subunit C (100 aa).

This sequence belongs to the GatC family. As to quaternary structure, heterotrimer of A, B and C subunits.

The enzyme catalyses L-glutamyl-tRNA(Gln) + L-glutamine + ATP + H2O = L-glutaminyl-tRNA(Gln) + L-glutamate + ADP + phosphate + H(+). It carries out the reaction L-aspartyl-tRNA(Asn) + L-glutamine + ATP + H2O = L-asparaginyl-tRNA(Asn) + L-glutamate + ADP + phosphate + 2 H(+). In terms of biological role, allows the formation of correctly charged Asn-tRNA(Asn) or Gln-tRNA(Gln) through the transamidation of misacylated Asp-tRNA(Asn) or Glu-tRNA(Gln) in organisms which lack either or both of asparaginyl-tRNA or glutaminyl-tRNA synthetases. The reaction takes place in the presence of glutamine and ATP through an activated phospho-Asp-tRNA(Asn) or phospho-Glu-tRNA(Gln). The protein is Aspartyl/glutamyl-tRNA(Asn/Gln) amidotransferase subunit C of Streptococcus suis (strain 98HAH33).